A 351-amino-acid chain; its full sequence is Photosystem II D2 protein (351 aa).

Residues 39 to 59 traverse the membrane as a helical segment; that stretch reads TAYLAIGGWLTGTTFVTSWYT. His-116 is a binding site for chlorophyll a. Residues 123–139 form a helical membrane-spanning segment; it reads GFMLRQFEIARLVGIRP. Pheophytin a is bound by residues Gln-128 and Asn-141. Residues 151 to 164 traverse the membrane as a helical segment; the sequence is VFVSVFLMYPLGQS. His-196 contributes to the chlorophyll a binding site. The chain crosses the membrane as a helical span at residues 206-226; that stretch reads GALLCAIHGATVENTLFEDGE. 2 residues coordinate a plastoquinone: His-213 and Phe-260. His-213 is a Fe cation binding site. His-267 provides a ligand contact to Fe cation. A helical membrane pass occupies residues 277–293; sequence GLWTSSIGIIGLALNLR.

The protein belongs to the reaction center PufL/M/PsbA/D family. In terms of assembly, PSII is composed of 1 copy each of membrane proteins PsbA, PsbB, PsbC, PsbD, PsbE, PsbF, PsbH, PsbI, PsbJ, PsbK, PsbL, PsbM, PsbT, PsbX, PsbY, PsbZ, Psb30/Ycf12, peripheral proteins PsbO, CyanoQ (PsbQ), PsbU, PsbV and a large number of cofactors. It forms dimeric complexes. Requires The D1/D2 heterodimer binds P680, chlorophylls that are the primary electron donor of PSII, and subsequent electron acceptors. It shares a non-heme iron and each subunit binds pheophytin, quinone, additional chlorophylls, carotenoids and lipids. There is also a Cl(-1) ion associated with D1 and D2, which is required for oxygen evolution. The PSII complex binds additional chlorophylls, carotenoids and specific lipids. as cofactor.

It is found in the cellular thylakoid membrane. The catalysed reaction is 2 a plastoquinone + 4 hnu + 2 H2O = 2 a plastoquinol + O2. Functionally, photosystem II (PSII) is a light-driven water:plastoquinone oxidoreductase that uses light energy to abstract electrons from H(2)O, generating O(2) and a proton gradient subsequently used for ATP formation. It consists of a core antenna complex that captures photons, and an electron transfer chain that converts photonic excitation into a charge separation. The D1/D2 (PsbA/PsbD) reaction center heterodimer binds P680, the primary electron donor of PSII as well as several subsequent electron acceptors. D2 is needed for assembly of a stable PSII complex. The polypeptide is Photosystem II D2 protein (Synechococcus sp. (strain WH7803)).